The sequence spans 20 residues: Thylakoid lumenal 22 kDa protein (20 aa).

The protein localises to the plastid. It is found in the chloroplast thylakoid lumen. The polypeptide is Thylakoid lumenal 22 kDa protein (Spinacia oleracea (Spinach)).